A 477-amino-acid polypeptide reads, in one-letter code: MQVLHVCSEMFPLLKTGGLADVVGALPAAQIAEGGDVRVLLPAFPDVRNGIPDSVLVAEIDSFAGRVGLRYGTYHGVGIYLIDAPWLYERPGSPYHDQSMNAYSDNHRRFALLGWMACELAKGLDRYWRPQVVHAHDWHAGLACAYLAANGHPARSVFTVHNLAYQGLFSAHHVPELWLPPSFFNIYGLEFYGQMSFLKAGLFYADHITAVSPTYAREITRPEFGYGMEGLLQERQRQGRLSGILNGVDDKIWDPSHDPRLTARYDADNLKNKAKNKLHLQKAMGLKVDESLPLFAVVSRLTSQKGLDLVLEALPALLEQGGQLALLGAGDAVLQQAFLAAAADYPEQVGVQIGYHEAFSHRIIGGADVIMVPSRFEPCGLTQLYGLKYGTLPLVRRTGGLADTVVDCALENLADGSASGFVFDDCDAVALGNAIRRAMVLWSRPKHWRHVQRHAMSVDFGWQVAAQEYLSLYQRLS.

K15 serves as a coordination point for ADP-alpha-D-glucose.

This sequence belongs to the glycosyltransferase 1 family. Bacterial/plant glycogen synthase subfamily.

The catalysed reaction is [(1-&gt;4)-alpha-D-glucosyl](n) + ADP-alpha-D-glucose = [(1-&gt;4)-alpha-D-glucosyl](n+1) + ADP + H(+). It participates in glycan biosynthesis; glycogen biosynthesis. Synthesizes alpha-1,4-glucan chains using ADP-glucose. The protein is Glycogen synthase of Serratia proteamaculans (strain 568).